The sequence spans 199 residues: Interleukin-11 (199 aa).

An N-terminal signal peptide occupies residues 1–21 (MNCVCRLVLVVLSLWPDTAVA). An important for interaction with IL11RA and for the stimulation of cell proliferation region spans residues 182 to 190 (HLTLDWAVR).

It belongs to the IL-6 superfamily. In terms of assembly, interacts with IL11RA to associate with IL6ST, giving rise to a multimeric signaling complex.

It localises to the secreted. Its function is as follows. Cytokine that stimulates the proliferation of hematopoietic stem cells and megakaryocyte progenitor cells and induces megakaryocyte maturation resulting in increased platelet production. Also promotes the proliferation of hepatocytes in response to liver damage. Binding to its receptor formed by IL6ST and IL11RA activates a signaling cascade that promotes cell proliferation. Signaling leads to the activation of intracellular protein kinases and the phosphorylation of STAT3. The interaction with the membrane-bound IL11RA and IL6ST stimulates 'classic signaling', whereas the binding of IL11 and soluble IL11RA to IL6ST stimulates 'trans-signaling'. The chain is Interleukin-11 (IL11) from Macaca fascicularis (Crab-eating macaque).